Consider the following 96-residue polypeptide: Co-chaperonin GroES (96 aa).

The protein belongs to the GroES chaperonin family. Heptamer of 7 subunits arranged in a ring. Interacts with the chaperonin GroEL.

It is found in the cytoplasm. Functionally, together with the chaperonin GroEL, plays an essential role in assisting protein folding. The GroEL-GroES system forms a nano-cage that allows encapsulation of the non-native substrate proteins and provides a physical environment optimized to promote and accelerate protein folding. GroES binds to the apical surface of the GroEL ring, thereby capping the opening of the GroEL channel. In Herminiimonas arsenicoxydans, this protein is Co-chaperonin GroES.